Here is a 468-residue protein sequence, read N- to C-terminus: Phosphatidylglycerol--prolipoprotein diacylglyceryl transferase (468 aa).

A run of 3 helical transmembrane segments spans residues 21–41 (LPVR…LLIG), 56–76 (YDIA…YHLA), and 96–116 (IWDG…GAWI). A 1,2-diacyl-sn-glycero-3-phospho-(1'-sn-glycerol) is bound at residue R144. The next 3 membrane-spanning stretches (helical) occupy residues 192 to 212 (VVQP…VALI), 218 to 238 (FIIG…AGRF), and 256 to 276 (INSF…ILAP). The interval 349-468 (VVQVADRDGE…RWWRLRRRRQ (120 aa)) is disordered. Residues 391–406 (AEAASAAPEEPAALAS) are compositionally biased toward low complexity. The span at 445–455 (DGIRRQDDFSS) shows a compositional bias: basic and acidic residues. Residues 456–468 (RRRRWWRLRRRRQ) are compositionally biased toward basic residues.

It belongs to the Lgt family.

It localises to the cell membrane. It carries out the reaction L-cysteinyl-[prolipoprotein] + a 1,2-diacyl-sn-glycero-3-phospho-(1'-sn-glycerol) = an S-1,2-diacyl-sn-glyceryl-L-cysteinyl-[prolipoprotein] + sn-glycerol 1-phosphate + H(+). Its pathway is protein modification; lipoprotein biosynthesis (diacylglyceryl transfer). Its function is as follows. Catalyzes the transfer of the diacylglyceryl group from phosphatidylglycerol to the sulfhydryl group of the N-terminal cysteine of a prolipoprotein, the first step in the formation of mature lipoproteins. In Mycobacterium bovis (strain ATCC BAA-935 / AF2122/97), this protein is Phosphatidylglycerol--prolipoprotein diacylglyceryl transferase.